We begin with the raw amino-acid sequence, 264 residues long: tRNA pseudouridine synthase A (264 aa).

Aspartate 51 serves as the catalytic Nucleophile. Tyrosine 109 is a binding site for substrate.

The protein belongs to the tRNA pseudouridine synthase TruA family. As to quaternary structure, homodimer.

The catalysed reaction is uridine(38/39/40) in tRNA = pseudouridine(38/39/40) in tRNA. Its function is as follows. Formation of pseudouridine at positions 38, 39 and 40 in the anticodon stem and loop of transfer RNAs. The sequence is that of tRNA pseudouridine synthase A from Pseudoalteromonas translucida (strain TAC 125).